The chain runs to 141 residues: uncharacterized protein (141 aa).

This is an uncharacterized protein from Arabidopsis thaliana (Mouse-ear cress).